The following is a 375-amino-acid chain: 4-hydroxy-3-methylbut-2-en-1-yl diphosphate synthase (flavodoxin) (375 aa).

Residues Cys-270, Cys-273, Cys-305, and Glu-312 each coordinate [4Fe-4S] cluster.

Belongs to the IspG family. Requires [4Fe-4S] cluster as cofactor.

It catalyses the reaction (2E)-4-hydroxy-3-methylbut-2-enyl diphosphate + oxidized [flavodoxin] + H2O + 2 H(+) = 2-C-methyl-D-erythritol 2,4-cyclic diphosphate + reduced [flavodoxin]. The protein operates within isoprenoid biosynthesis; isopentenyl diphosphate biosynthesis via DXP pathway; isopentenyl diphosphate from 1-deoxy-D-xylulose 5-phosphate: step 5/6. In terms of biological role, converts 2C-methyl-D-erythritol 2,4-cyclodiphosphate (ME-2,4cPP) into 1-hydroxy-2-methyl-2-(E)-butenyl 4-diphosphate. The polypeptide is 4-hydroxy-3-methylbut-2-en-1-yl diphosphate synthase (flavodoxin) (Yersinia pseudotuberculosis serotype IB (strain PB1/+)).